The primary structure comprises 716 residues: Translation initiation factor IF-2 (716 aa).

The interval G53–E135 is disordered. Polar residues predominate over residues V57–N83. Low complexity predominate over residues V93–K109. A tr-type G domain is found at I217–K386. Residues G226–T233 are G1. G226–T233 provides a ligand contact to GTP. Positions G251–H255 are G2. The segment at D272–G275 is G3. GTP is bound by residues D272–H276 and N326–D329. Residues N326–D329 form a G4 region. The interval S362 to L364 is G5.

This sequence belongs to the TRAFAC class translation factor GTPase superfamily. Classic translation factor GTPase family. IF-2 subfamily.

Its subcellular location is the cytoplasm. One of the essential components for the initiation of protein synthesis. Protects formylmethionyl-tRNA from spontaneous hydrolysis and promotes its binding to the 30S ribosomal subunits. Also involved in the hydrolysis of GTP during the formation of the 70S ribosomal complex. The protein is Translation initiation factor IF-2 of Bacillus velezensis (strain DSM 23117 / BGSC 10A6 / LMG 26770 / FZB42) (Bacillus amyloliquefaciens subsp. plantarum).